The following is a 197-amino-acid chain: Probable GTP-binding protein EngB (197 aa).

The EngB-type G domain maps to Glu-22–Glu-195. GTP contacts are provided by residues Gly-30 to Ser-37, Gly-57 to Thr-61, Asp-75 to Gly-78, Thr-142 to Asp-145, and Phe-174 to Ala-176. Residues Ser-37 and Thr-59 each coordinate Mg(2+).

Belongs to the TRAFAC class TrmE-Era-EngA-EngB-Septin-like GTPase superfamily. EngB GTPase family. Mg(2+) is required as a cofactor.

Functionally, necessary for normal cell division and for the maintenance of normal septation. This chain is Probable GTP-binding protein EngB, found in Exiguobacterium sp. (strain ATCC BAA-1283 / AT1b).